A 276-amino-acid polypeptide reads, in one-letter code: Chlorophyll a-b binding protein CP29.3, chloroplastic (276 aa).

Residues 1 to 29 (MATTTAAAASGIFGIRIQDPRPGTGRVQA) constitute a chloroplast transit peptide. Residues 1–53 (MATTTAAAASGIFGIRIQDPRPGTGRVQARFGFSFGKKKPAPPPKKSRQVQDD) form a disordered region. Over residues 36–48 (GKKKPAPPPKKSR) the composition is skewed to basic residues. A chlorophyll b-binding site is contributed by Trp59. Phe79, Glu141, and His144 together coordinate chlorophyll a. Residues 147 to 167 (WAMLGTLGAIAVEALTGIAWQ) form a helical membrane-spanning segment. Leu181 provides a ligand contact to chlorophyll a. A helical membrane pass occupies residues 185–205 (LPFSLTTLIWIEVLVVGYIEF). Positions 204 and 207 each coordinate chlorophyll b. Positions 242, 245, 247, and 259 each coordinate chlorophyll a. Residues 248 to 268 (LAMVAFLIFALQAAFTGKGPV) traverse the membrane as a helical segment.

Belongs to the light-harvesting chlorophyll a/b-binding (LHC) protein family. The LHC complex consists of chlorophyll a-b binding proteins. Binds at least 14 chlorophylls (8 Chl-a and 6 Chl-b) and carotenoids such as lutein and neoxanthin. serves as cofactor. In terms of processing, photoregulated by reversible phosphorylation of its threonine residues.

Its subcellular location is the plastid. The protein resides in the chloroplast thylakoid membrane. Its function is as follows. The light-harvesting complex (LHC) functions as a light receptor, it captures and delivers excitation energy to photosystems with which it is closely associated. This Arabidopsis thaliana (Mouse-ear cress) protein is Chlorophyll a-b binding protein CP29.3, chloroplastic (LHCB4.3).